The primary structure comprises 477 residues: Glycogen synthase (477 aa).

Lys15 provides a ligand contact to ADP-alpha-D-glucose.

This sequence belongs to the glycosyltransferase 1 family. Bacterial/plant glycogen synthase subfamily.

The enzyme catalyses [(1-&gt;4)-alpha-D-glucosyl](n) + ADP-alpha-D-glucose = [(1-&gt;4)-alpha-D-glucosyl](n+1) + ADP + H(+). The protein operates within glycan biosynthesis; glycogen biosynthesis. Functionally, synthesizes alpha-1,4-glucan chains using ADP-glucose. The chain is Glycogen synthase from Mannheimia succiniciproducens (strain KCTC 0769BP / MBEL55E).